Reading from the N-terminus, the 123-residue chain is PTS-dependent dihydroxyacetone kinase, phosphotransferase subunit DhaM (123 aa).

A PTS EIIA type-4 domain is found at 2–123 (TYGIVIVSHS…EQLEKMLIEK (122 aa)). The Tele-phosphohistidine intermediate; for EIIA activity role is filled by His-10.

As to quaternary structure, homodimer. The dihydroxyacetone kinase complex is composed of a homodimer of DhaM, a homodimer of DhaK and the subunit DhaL.

The catalysed reaction is dihydroxyacetone + phosphoenolpyruvate = dihydroxyacetone phosphate + pyruvate. It participates in polyol metabolism; glycerol degradation. In terms of biological role, component of the dihydroxyacetone kinase complex, which is responsible for the phosphoenolpyruvate (PEP)-dependent phosphorylation of dihydroxyacetone. DhaM serves as the phosphoryl donor. Is phosphorylated by phosphoenolpyruvate in an EI- and HPr-dependent reaction, and a phosphorelay system on histidine residues finally leads to phosphoryl transfer to DhaL and dihydroxyacetone. In Lactococcus lactis subsp. lactis (strain IL1403) (Streptococcus lactis), this protein is PTS-dependent dihydroxyacetone kinase, phosphotransferase subunit DhaM.